The chain runs to 164 residues: Phosphopantetheine adenylyltransferase (164 aa).

Threonine 10 contacts substrate. Residues 10 to 11 (TF) and histidine 18 contribute to the ATP site. Positions 44, 76, and 90 each coordinate substrate. Residues 91–93 (GLR), glutamate 101, and 126–132 (YAFISSS) each bind ATP.

This sequence belongs to the bacterial CoaD family. As to quaternary structure, homohexamer. Requires Mg(2+) as cofactor.

The protein resides in the cytoplasm. The enzyme catalyses (R)-4'-phosphopantetheine + ATP + H(+) = 3'-dephospho-CoA + diphosphate. It participates in cofactor biosynthesis; coenzyme A biosynthesis; CoA from (R)-pantothenate: step 4/5. Functionally, reversibly transfers an adenylyl group from ATP to 4'-phosphopantetheine, yielding dephospho-CoA (dPCoA) and pyrophosphate. The polypeptide is Phosphopantetheine adenylyltransferase (Halorhodospira halophila (strain DSM 244 / SL1) (Ectothiorhodospira halophila (strain DSM 244 / SL1))).